The chain runs to 175 residues: UPF0398 protein SSA_1858 (175 aa).

It belongs to the UPF0398 family.

In Streptococcus sanguinis (strain SK36), this protein is UPF0398 protein SSA_1858.